The sequence spans 173 residues: DRBM domain-containing protein 340R (173 aa).

The DRBM domain occupies Asn30–Leu102.

The polypeptide is DRBM domain-containing protein 340R (Invertebrate iridescent virus 6 (IIV-6)).